The primary structure comprises 226 residues: Thioredoxin domain-containing protein 9 (226 aa).

The Thioredoxin domain occupies 52–180; that stretch reads LEALKKAQQQ…TTETLEWRLG (129 aa). A phosphoserine mark is found at S188, S221, and S223.

As to quaternary structure, forms ternary complexes with the chaperonin TCP1 complex, spanning the cylindrical chaperonin cavity and contacting at least 2 subunits.

It is found in the cytoplasm. It localises to the nucleus. Its subcellular location is the cytoskeleton. The protein resides in the microtubule organizing center. The protein localises to the centrosome. It is found in the midbody. Functionally, significantly diminishes the chaperonin TCP1 complex ATPase activity, thus negatively impacts protein folding, including that of actin or tubulin. The chain is Thioredoxin domain-containing protein 9 (TXNDC9) from Bos taurus (Bovine).